Consider the following 194-residue polypeptide: Putative manganese efflux pump MntP (194 aa).

Helical transmembrane passes span 2–22 (ISII…AFAV), 43–63 (LWFG…ASTF), 67–87 (VTQF…GNMV), 111–131 (PLAV…AFMF), 137–157 (AFAI…GLHI), and 174–194 (GVVL…VIAF).

Belongs to the MntP (TC 9.B.29) family.

The protein localises to the cell membrane. In terms of biological role, probably functions as a manganese efflux pump. This chain is Putative manganese efflux pump MntP, found in Bifidobacterium longum (strain DJO10A).